The following is an 803-amino-acid chain: Translation initiation factor IF-2 (803 aa).

Over residues 65 to 75 (PDKVEEKKEHT) the composition is skewed to basic and acidic residues. Residues 65–186 (PDKVEEKKEH…PKSRKSKTLK (122 aa)) are disordered. The segment covering 175-185 (NKPKSRKSKTL) has biased composition (basic residues). Residues 300–468 (IRPPVVTIMG…ILLTADAALE (169 aa)) form the tr-type G domain. Residues 309–316 (GHVDHGKT) are G1. Position 309–316 (309–316 (GHVDHGKT)) interacts with GTP. Residues 334-338 (GITQH) form a G2 region. The G3 stretch occupies residues 355–358 (DTPG). GTP contacts are provided by residues 355-359 (DTPGH) and 409-412 (NKID). Residues 409-412 (NKID) form a G4 region. Positions 445–447 (SAK) are G5.

The protein belongs to the TRAFAC class translation factor GTPase superfamily. Classic translation factor GTPase family. IF-2 subfamily.

It is found in the cytoplasm. Its function is as follows. One of the essential components for the initiation of protein synthesis. Protects formylmethionyl-tRNA from spontaneous hydrolysis and promotes its binding to the 30S ribosomal subunits. Also involved in the hydrolysis of GTP during the formation of the 70S ribosomal complex. The chain is Translation initiation factor IF-2 from Tropheryma whipplei (strain Twist) (Whipple's bacillus).